Consider the following 157-residue polypeptide: Protein Smg homolog (157 aa).

It belongs to the Smg family.

This chain is Protein Smg homolog, found in Shewanella halifaxensis (strain HAW-EB4).